Here is a 156-residue protein sequence, read N- to C-terminus: Small ribosomal subunit protein uS7 (156 aa).

The protein belongs to the universal ribosomal protein uS7 family. Part of the 30S ribosomal subunit. Contacts proteins S9 and S11.

In terms of biological role, one of the primary rRNA binding proteins, it binds directly to 16S rRNA where it nucleates assembly of the head domain of the 30S subunit. Is located at the subunit interface close to the decoding center, probably blocks exit of the E-site tRNA. The sequence is that of Small ribosomal subunit protein uS7 from Cupriavidus necator (strain ATCC 17699 / DSM 428 / KCTC 22496 / NCIMB 10442 / H16 / Stanier 337) (Ralstonia eutropha).